The chain runs to 51 residues: Large ribosomal subunit protein bL33 (51 aa).

The disordered stretch occupies residues 1-20 (MRDKIRLNSSAGTGHFYTTD).

The protein belongs to the bacterial ribosomal protein bL33 family.

In Psychromonas ingrahamii (strain DSM 17664 / CCUG 51855 / 37), this protein is Large ribosomal subunit protein bL33.